The chain runs to 98 residues: NADH-ubiquinone oxidoreductase chain 4L (98 aa).

Helical transmembrane passes span 1-21 (MSLV…GLLM), 30-50 (LLCL…TILT), and 61-81 (IVLL…LVMV).

The protein belongs to the complex I subunit 4L family. In terms of assembly, core subunit of respiratory chain NADH dehydrogenase (Complex I) which is composed of 45 different subunits.

It is found in the mitochondrion inner membrane. It catalyses the reaction a ubiquinone + NADH + 5 H(+)(in) = a ubiquinol + NAD(+) + 4 H(+)(out). Functionally, core subunit of the mitochondrial membrane respiratory chain NADH dehydrogenase (Complex I) which catalyzes electron transfer from NADH through the respiratory chain, using ubiquinone as an electron acceptor. Part of the enzyme membrane arm which is embedded in the lipid bilayer and involved in proton translocation. This Crocidura russula (Greater white-toothed shrew) protein is NADH-ubiquinone oxidoreductase chain 4L (MT-ND4L).